A 321-amino-acid chain; its full sequence is Cytochrome c biogenesis protein CcsA (321 aa).

The next 7 helical transmembrane spans lie at 17-37, 41-61, 68-88, 143-163, 227-247, 260-277, and 288-308; these read IISI…IIGL, LEKG…IRWV, LSNL…IHIF, MLLS…LLVI, IINL…VWAN, ETWA…LHTR, and AIVA…VNLL.

This sequence belongs to the CcmF/CycK/Ccl1/NrfE/CcsA family. As to quaternary structure, may interact with Ccs1.

The protein localises to the plastid. It is found in the chloroplast thylakoid membrane. Required during biogenesis of c-type cytochromes (cytochrome c6 and cytochrome f) at the step of heme attachment. The protein is Cytochrome c biogenesis protein CcsA of Piper cenocladum (Ant piper).